Reading from the N-terminus, the 149-residue chain is Large ribosomal subunit protein bL20m (149 aa).

Residues 1–9 (MVFLTTRLW) constitute a mitochondrion transit peptide.

This sequence belongs to the bacterial ribosomal protein bL20 family. As to quaternary structure, component of the mitochondrial ribosome large subunit (39S) which comprises a 16S rRNA and about 50 distinct proteins. Interacts with OXA1L.

It is found in the mitochondrion. The sequence is that of Large ribosomal subunit protein bL20m (Mrpl20) from Mus musculus (Mouse).